The chain runs to 630 residues: Plastin-3 (630 aa).

EF-hand domains are found at residues 12–47 (DELDELKEAFAKVDLNSNGFICDYELHELFKEANMP) and 52–87 (KVREIIQKLMLDGDRNKDGKISFDEFVYIFQEVKSS). The Ca(2+) site is built by Asp-25, Asn-27, Asn-29, Glu-36, Asp-65, Asn-67, Asp-69, Lys-71, and Glu-76. Actin-binding stretches follow at residues 109–382 (TSEL…ALTK) and 383–627 (PENQ…GRGM). Calponin-homology (CH) domains follow at residues 123–239 (EEEK…KIGL) and 267–378 (LSPE…NKYP). Phosphoserine is present on residues Ser-268, Ser-293, Ser-326, and Ser-339. Thr-391 carries the post-translational modification Phosphothreonine. 2 Calponin-homology (CH) domains span residues 397–506 (TREE…RRYT) and 518–627 (KAND…GRGM).

In terms of assembly, monomer.

The protein resides in the cytoplasm. In terms of biological role, actin-bundling protein. The sequence is that of Plastin-3 (PLS3) from Bos taurus (Bovine).